The following is a 524-amino-acid chain: Peptide chain release factor 3 (524 aa).

The 269-residue stretch at 10-278 folds into the tr-type G domain; that stretch reads DSRRTFAIIS…TFLQFAPAPH (269 aa). GTP-binding positions include 19–26, 87–91, and 141–144; these read SHPDAGKT, DTPGH, and NKLD.

The protein belongs to the TRAFAC class translation factor GTPase superfamily. Classic translation factor GTPase family. PrfC subfamily.

It is found in the cytoplasm. Its function is as follows. Increases the formation of ribosomal termination complexes and stimulates activities of RF-1 and RF-2. It binds guanine nucleotides and has strong preference for UGA stop codons. It may interact directly with the ribosome. The stimulation of RF-1 and RF-2 is significantly reduced by GTP and GDP, but not by GMP. This chain is Peptide chain release factor 3, found in Enterococcus faecalis (strain ATCC 700802 / V583).